The sequence spans 343 residues: D-erythrose-4-phosphate dehydrogenase (343 aa).

12 to 13 is an NAD(+) binding site; it reads RI. Residues 154–156, R200, 213–214, and R236 each bind substrate; these read SCT and TK. The active-site Nucleophile is C155. N318 lines the NAD(+) pocket.

This sequence belongs to the glyceraldehyde-3-phosphate dehydrogenase family. Epd subfamily. In terms of assembly, homotetramer.

Its subcellular location is the cytoplasm. The enzyme catalyses D-erythrose 4-phosphate + NAD(+) + H2O = 4-phospho-D-erythronate + NADH + 2 H(+). The protein operates within cofactor biosynthesis; pyridoxine 5'-phosphate biosynthesis; pyridoxine 5'-phosphate from D-erythrose 4-phosphate: step 1/5. In terms of biological role, catalyzes the NAD-dependent conversion of D-erythrose 4-phosphate to 4-phosphoerythronate. The chain is D-erythrose-4-phosphate dehydrogenase from Pseudoalteromonas translucida (strain TAC 125).